A 53-amino-acid polypeptide reads, in one-letter code: MLRYALVFFIIAIIAAVLGFGGIAAGAAEIAKILFYIFVVIFLVTLVLGVARR.

A run of 2 helical transmembrane segments spans residues 5 to 25 and 30 to 50; these read ALVFFIIAIIAAVLGFGGIAA and IAKILFYIFVVIFLVTLVLGV.

This sequence belongs to the UPF0391 family.

It localises to the cell membrane. The chain is UPF0391 membrane protein BPSS2216 from Burkholderia pseudomallei (strain K96243).